Consider the following 451-residue polypeptide: Proton-coupled amino acid transporter-like protein acs (451 aa).

Residues M1–T48 are Cytoplasmic-facing. A helical transmembrane segment spans residues F49–A69. Topologically, residues H70–T80 are extracellular. N75 carries an N-linked (GlcNAc...) asparagine glycan. A helical membrane pass occupies residues L81–L101. Topologically, residues C102–P136 are cytoplasmic. The chain crosses the membrane as a helical span at residues F137–I157. Residues A158–E167 lie on the Extracellular side of the membrane. Residues Y168–I188 traverse the membrane as a helical segment. Residues Y189–P199 lie on the Cytoplasmic side of the membrane. A helical transmembrane segment spans residues F200–F220. Residues E221–K237 are Extracellular-facing. Residues L238–I258 traverse the membrane as a helical segment. Over E259 to C272 the chain is Cytoplasmic. A helical transmembrane segment spans residues G273–G293. Topologically, residues Y294–K320 are extracellular. The N-linked (GlcNAc...) asparagine glycan is linked to N299. A helical membrane pass occupies residues V321–I341. Residues L342–T357 are Cytoplasmic-facing. The chain crosses the membrane as a helical span at residues F358–I378. At P379–S382 the chain is on the extracellular side. Residues V383 to L403 traverse the membrane as a helical segment. Residues L404–K420 are Cytoplasmic-facing. The chain crosses the membrane as a helical span at residues L421–V441. Residues S442–K451 lie on the Extracellular side of the membrane.

It belongs to the amino acid/polyamine transporter 2 family. In terms of tissue distribution, expressed in the proximal and distal regions of the midgut; expressed in enterocytes and progenitor cells. Expression increases in response to intestinal bacterial infection and spreads further into the midgut, eventually covering the entire midgut.

It is found in the cell membrane. It localises to the late endosome membrane. The protein localises to the lysosome membrane. Its subcellular location is the basal cell membrane. In terms of biological role, amino acid transporter which has pH-dependent electrogenic transport activity for alanine, glycine and proline. Plays a role in positive regulation of growth by directly or indirectly modulating the effects of the TOR signaling pathway. Required in enterocytes for the efficient recovery of gut epithelium following the cytoplasmic purge response to bacterial infection. Acts cell-autonomously to promote the retrograde transport of amino acids into the intestinal epithelium. Acts non-cell-autonomously through the insulin signaling pathway to stimulate Myc expression and the release of amino acids from nutrient stores into the hemolymph. The chain is Proton-coupled amino acid transporter-like protein acs from Drosophila melanogaster (Fruit fly).